Consider the following 300-residue polypeptide: Free fatty acid receptor 1 (300 aa).

The Extracellular segment spans residues 1–8 (MDLPPQLS). A helical transmembrane segment spans residues 9 to 31 (FALYVAAFALGFPLNVLAIRGAR). Residues 32-41 (AHARRRLTPS) are Cytoplasmic-facing. Residues 42–64 (LVYALNLGCSDLLLTVSLPLKAV) form a helical membrane-spanning segment. The Extracellular segment spans residues 65–79 (EALASGAWPLPASLC). A disulfide bridge connects residues cysteine 79 and cysteine 170. Residues 80–101 (PVFGVAHFAPLYAGGGFLAALS) form a helical membrane-spanning segment. Residues 102 to 121 (AGRYLGAAFPLGYQAFRRPC) lie on the Cytoplasmic side of the membrane. A helical transmembrane segment spans residues 122–142 (YSWGVCAAIWALVLCHLGLVF). The Extracellular segment spans residues 143–178 (VLEAPGGWLDHSNTSLGINTPVNGSPVCLEAWDPAS). Asparagine 155 carries an N-linked (GlcNAc...) asparagine glycan. The helical transmembrane segment at 179 to 200 (AGPARFSLSLLLFFLPLAITAF) threads the bilayer. Residues 201–223 (CYVGCLRALAHSGLTHRRKLRAA) are Cytoplasmic-facing. Residues 224-248 (WVAGGALLTLLLCVGPYNASNVASF) traverse the membrane as a helical segment. Residues 249–256 (LNPNLGGS) lie on the Extracellular side of the membrane. A helical membrane pass occupies residues 257–279 (WRKLGLITGAWSVVLNPLVTGYL). Residues 280–300 (GRGPGLKTVCAARTQGSTSQK) are Cytoplasmic-facing.

The protein belongs to the G-protein coupled receptor 1 family.

It is found in the cell membrane. In terms of biological role, G-protein coupled receptor for medium and long chain saturated and unsaturated fatty acids that plays an important role in glucose homeostasis. Fatty acid binding increases glucose-stimulated insulin secretion, and may also enhance the secretion of glucagon-like peptide 1 (GLP-1). May also play a role in bone homeostasis; receptor signaling activates pathways that inhibit osteoclast differentiation. Ligand binding leads to a conformation change that triggers signaling via G-proteins that activate phospholipase C, leading to an increase of the intracellular calcium concentration. Seems to act through a G(q) and G(i)-mediated pathway. Mediates the anti-inflammatory effects of omega-3 polyunsaturated fatty acids (PUFAs) via inhibition of NLRP3 inflammasome activation. This chain is Free fatty acid receptor 1 (FFAR1), found in Macaca fascicularis (Crab-eating macaque).